Here is a 91-residue protein sequence, read N- to C-terminus: Small ribosomal subunit protein bS18 (91 aa).

Residues 1 to 27 (MTQQSNTERKPRAKGPKRPRKPKVDPF) form a disordered region. The segment covering 11–21 (PRAKGPKRPRK) has biased composition (basic residues).

The protein belongs to the bacterial ribosomal protein bS18 family. Part of the 30S ribosomal subunit. Forms a tight heterodimer with protein bS6.

In terms of biological role, binds as a heterodimer with protein bS6 to the central domain of the 16S rRNA, where it helps stabilize the platform of the 30S subunit. This Deinococcus geothermalis (strain DSM 11300 / CIP 105573 / AG-3a) protein is Small ribosomal subunit protein bS18.